The chain runs to 413 residues: Hemolin (413 aa).

The N-terminal stretch at 1–19 is a signal peptide; the sequence is MAFKSIAVLSACIIVGSAL. Ig-like C2-type domains lie at 25–112, 122–211, 233–322, and 327–413; these read PVLK…RVIS, PAKT…EEVV, PQYV…LKLT, and PKYE…VQVN. 4 cysteine pairs are disulfide-bonded: Cys-46/Cys-97, Cys-140/Cys-199, Cys-252/Cys-305, and Cys-349/Cys-395. N-linked (GlcNAc...) asparagine glycosylation is present at Asn-283.

The protein belongs to the hemolin family. As to expression, hemolymph.

It localises to the secreted. The protein resides in the extracellular space. Functionally, insect-immune protein. Forms a protein complex at the bacterial surface. Can inhibit hemocyte aggregation. This chain is Hemolin, found in Hyalophora cecropia (Cecropia moth).